The chain runs to 340 residues: Ketol-acid reductoisomerase (NADP(+)) (340 aa).

Positions V3–T182 constitute a KARI N-terminal Rossmann domain. Residues Y26–Q29, R49, S53, and D83–Q86 contribute to the NADP(+) site. Residue H108 is part of the active site. Residue G134 participates in NADP(+) binding. Residues T183–V328 enclose the KARI C-terminal knotted domain. Residues D191, E195, E227, and E231 each contribute to the Mg(2+) site. S252 is a substrate binding site.

Belongs to the ketol-acid reductoisomerase family. It depends on Mg(2+) as a cofactor.

The catalysed reaction is (2R)-2,3-dihydroxy-3-methylbutanoate + NADP(+) = (2S)-2-acetolactate + NADPH + H(+). The enzyme catalyses (2R,3R)-2,3-dihydroxy-3-methylpentanoate + NADP(+) = (S)-2-ethyl-2-hydroxy-3-oxobutanoate + NADPH + H(+). The protein operates within amino-acid biosynthesis; L-isoleucine biosynthesis; L-isoleucine from 2-oxobutanoate: step 2/4. It participates in amino-acid biosynthesis; L-valine biosynthesis; L-valine from pyruvate: step 2/4. Its function is as follows. Involved in the biosynthesis of branched-chain amino acids (BCAA). Catalyzes an alkyl-migration followed by a ketol-acid reduction of (S)-2-acetolactate (S2AL) to yield (R)-2,3-dihydroxy-isovalerate. In the isomerase reaction, S2AL is rearranged via a Mg-dependent methyl migration to produce 3-hydroxy-3-methyl-2-ketobutyrate (HMKB). In the reductase reaction, this 2-ketoacid undergoes a metal-dependent reduction by NADPH to yield (R)-2,3-dihydroxy-isovalerate. The chain is Ketol-acid reductoisomerase (NADP(+)) from Streptococcus mutans serotype c (strain ATCC 700610 / UA159).